The following is a 135-amino-acid chain: Ribosome-binding factor A (135 aa).

The protein belongs to the RbfA family. In terms of assembly, monomer. Binds 30S ribosomal subunits, but not 50S ribosomal subunits or 70S ribosomes.

The protein resides in the cytoplasm. In terms of biological role, one of several proteins that assist in the late maturation steps of the functional core of the 30S ribosomal subunit. Associates with free 30S ribosomal subunits (but not with 30S subunits that are part of 70S ribosomes or polysomes). Required for efficient processing of 16S rRNA. May interact with the 5'-terminal helix region of 16S rRNA. The protein is Ribosome-binding factor A of Bartonella quintana (strain Toulouse) (Rochalimaea quintana).